Reading from the N-terminus, the 106-residue chain is Urease subunit beta (106 aa).

This sequence belongs to the urease beta subunit family. Heterotrimer of UreA (gamma), UreB (beta) and UreC (alpha) subunits. Three heterotrimers associate to form the active enzyme.

It localises to the cytoplasm. The catalysed reaction is urea + 2 H2O + H(+) = hydrogencarbonate + 2 NH4(+). Its pathway is nitrogen metabolism; urea degradation; CO(2) and NH(3) from urea (urease route): step 1/1. The sequence is that of Urease subunit beta from Klebsiella pneumoniae (strain 342).